Reading from the N-terminus, the 33-residue chain is GLFDVVKGVLKGAGKNVAGSLLEQLKCKLSGGC.

A disulfide bond links Cys27 and Cys33.

In terms of tissue distribution, expressed by the skin glands.

The protein localises to the secreted. In terms of biological role, antimicrobial peptide. Active against the Gram-positive bacterium S.aureus (MIC=30 uM) and the Gram-negative bacterium E.coli (MIC=30 uM). This is Brevinin-2DYb from Rana dybowskii (Dybovsky's frog).